The primary structure comprises 119 residues: Large ribosomal subunit protein uL14 (119 aa).

This sequence belongs to the universal ribosomal protein uL14 family. In terms of assembly, part of the 50S ribosomal subunit. Forms a cluster with proteins L3 and L19. In the 70S ribosome, L14 and L19 interact and together make contacts with the 16S rRNA in bridges B5 and B8.

In terms of biological role, binds to 23S rRNA. Forms part of two intersubunit bridges in the 70S ribosome. The protein is Large ribosomal subunit protein uL14 of Ehrlichia canis (strain Jake).